The following is a 264-amino-acid chain: Thymidylate synthase (264 aa).

Arginine 21 contributes to the dUMP binding site. Histidine 51 is a binding site for (6R)-5,10-methylene-5,6,7,8-tetrahydrofolate. 126–127 (RR) is a binding site for dUMP. Cysteine 146 serves as the catalytic Nucleophile. DUMP is bound by residues 166-169 (RSAD), asparagine 177, and 207-209 (HIY). Aspartate 169 contacts (6R)-5,10-methylene-5,6,7,8-tetrahydrofolate. Alanine 263 lines the (6R)-5,10-methylene-5,6,7,8-tetrahydrofolate pocket.

It belongs to the thymidylate synthase family. Bacterial-type ThyA subfamily. As to quaternary structure, homodimer.

It localises to the cytoplasm. It carries out the reaction dUMP + (6R)-5,10-methylene-5,6,7,8-tetrahydrofolate = 7,8-dihydrofolate + dTMP. It participates in pyrimidine metabolism; dTTP biosynthesis. Its function is as follows. Catalyzes the reductive methylation of 2'-deoxyuridine-5'-monophosphate (dUMP) to 2'-deoxythymidine-5'-monophosphate (dTMP) while utilizing 5,10-methylenetetrahydrofolate (mTHF) as the methyl donor and reductant in the reaction, yielding dihydrofolate (DHF) as a by-product. This enzymatic reaction provides an intracellular de novo source of dTMP, an essential precursor for DNA biosynthesis. This chain is Thymidylate synthase, found in Porphyromonas gingivalis (strain ATCC BAA-308 / W83).